Reading from the N-terminus, the 471-residue chain is ATP synthase subunit beta (471 aa).

156-163 (GGAGVGKT) is a binding site for ATP.

It belongs to the ATPase alpha/beta chains family. In terms of assembly, F-type ATPases have 2 components, CF(1) - the catalytic core - and CF(0) - the membrane proton channel. CF(1) has five subunits: alpha(3), beta(3), gamma(1), delta(1), epsilon(1). CF(0) has three main subunits: a(1), b(2) and c(9-12). The alpha and beta chains form an alternating ring which encloses part of the gamma chain. CF(1) is attached to CF(0) by a central stalk formed by the gamma and epsilon chains, while a peripheral stalk is formed by the delta and b chains.

It localises to the cell inner membrane. It carries out the reaction ATP + H2O + 4 H(+)(in) = ADP + phosphate + 5 H(+)(out). Functionally, produces ATP from ADP in the presence of a proton gradient across the membrane. The catalytic sites are hosted primarily by the beta subunits. In Nitratidesulfovibrio vulgaris (strain DSM 19637 / Miyazaki F) (Desulfovibrio vulgaris), this protein is ATP synthase subunit beta.